The chain runs to 33 residues: Photosystem II reaction center protein Psb30 (33 aa).

A helical membrane pass occupies residues 5–25; that stretch reads VIAQLASLALIIVLGPLVIGL.

Belongs to the Psb30/Ycf12 family. PSII is composed of 1 copy each of membrane proteins PsbA, PsbB, PsbC, PsbD, PsbE, PsbF, PsbH, PsbI, PsbJ, PsbK, PsbL, PsbM, PsbT, PsbX, PsbY, PsbZ, Psb30/Ycf12, peripheral proteins of the oxygen-evolving complex and a large number of cofactors. It forms dimeric complexes.

It is found in the plastid. It localises to the chloroplast thylakoid membrane. A core subunit of photosystem II (PSII), probably helps stabilize the reaction center. The polypeptide is Photosystem II reaction center protein Psb30 (Chara vulgaris (Common stonewort)).